The following is a 1067-amino-acid chain: Sal-like protein 4 (1067 aa).

The disordered stretch occupies residues 1–62; sequence MSRRKQAKPQ…SEDSIPVKRP (62 aa). The segment covering 15–42 has biased composition (low complexity); sequence EEGQGEQPQQLPSPDLAEALAAEEPGAP. Residue S53 is modified to Phosphoserine. The C2H2-type 1; atypical zinc finger occupies 68-90; sequence HICNKCCAEFFSLSEFMEHKKSC. Positions 115–140 are disordered; that stretch reads ALSHQLGSPSNKDSLQENGSSSGDLK. The segment covering 119-137 has biased composition (polar residues); it reads QLGSPSNKDSLQENGSSSG. Residue K151 forms a Glycyl lysine isopeptide (Lys-Gly) (interchain with G-Cter in SUMO1); alternate linkage. A Glycyl lysine isopeptide (Lys-Gly) (interchain with G-Cter in SUMO2); alternate cross-link involves residue K151. Residues K170, K185, and K291 each participate in a glycyl lysine isopeptide (Lys-Gly) (interchain with G-Cter in SUMO2) cross-link. S308 carries the post-translational modification Phosphoserine. K317 participates in a covalent cross-link: Glycyl lysine isopeptide (Lys-Gly) (interchain with G-Cter in SUMO1); alternate. K317 participates in a covalent cross-link: Glycyl lysine isopeptide (Lys-Gly) (interchain with G-Cter in SUMO2); alternate. K377 participates in a covalent cross-link: Glycyl lysine isopeptide (Lys-Gly) (interchain with G-Cter in SUMO2). K379 participates in a covalent cross-link: Glycyl lysine isopeptide (Lys-Gly) (interchain with G-Cter in SUMO1); alternate. Residue K379 forms a Glycyl lysine isopeptide (Lys-Gly) (interchain with G-Cter in SUMO2); alternate linkage. 2 C2H2-type zinc fingers span residues 387–409 and 415–437; these read HKCR…LRSH and YVCP…LQRH. K441 participates in a covalent cross-link: Glycyl lysine isopeptide (Lys-Gly) (interchain with G-Cter in SUMO2). The tract at residues 471 to 521 is disordered; it reads DESSLSVDAEPVPVTGTPSLGLPQKLTSGPNSRDLMGGSLPNDMQPGPSPE. K557 participates in a covalent cross-link: Glycyl lysine isopeptide (Lys-Gly) (interchain with G-Cter in SUMO2). 2 C2H2-type zinc fingers span residues 573 to 595 and 601 to 623; these read NECL…YRTH and FQCK…LGVH. Residues K604 and K630 each participate in a glycyl lysine isopeptide (Lys-Gly) (interchain with G-Cter in SUMO2) cross-link. The segment at 633 to 655 adopts a C2H2-type 6 zinc-finger fold; sequence HSCPICQKKFTNAVMLQQHIRMH. Disordered stretches follow at residues 682–716 and 752–835; these read ENGS…STVS and RQSS…SLPP. Residues 693 to 704 show a composition bias toward acidic residues; it reads DAAEGMEAEEVC. Polar residues-rich tracts occupy residues 707-716 and 752-761; these read DVPSGPSTVS and RQSSRENSSL. 2 positions are modified to phosphoserine: S785 and S798. A compositionally biased stretch (polar residues) spans 798 to 809; the sequence is SPANSQAGSVKS. The span at 810 to 829 shows a compositional bias: basic and acidic residues; the sequence is RSPEGHKAEGVESCRVDTEG. K846 is covalently cross-linked (Glycyl lysine isopeptide (Lys-Gly) (interchain with G-Cter in SUMO1); alternate). K846 participates in a covalent cross-link: Glycyl lysine isopeptide (Lys-Gly) (interchain with G-Cter in SUMO2); alternate. The C2H2-type 7 zinc-finger motif lies at 880–902; sequence HCCTRCGKNFSSASALQIHERTH. K906 participates in a covalent cross-link: Glycyl lysine isopeptide (Lys-Gly) (interchain with G-Cter in SUMO2). The C2H2-type 8 zinc finger occupies 908–930; it reads FVCNICGRAFTTKGNLKVHYMTH. Glycyl lysine isopeptide (Lys-Gly) (interchain with G-Cter in SUMO2) cross-links involve residues K942 and K957. The residue at position 1029 (S1029) is a Phosphoserine.

This sequence belongs to the sal C2H2-type zinc-finger protein family. As to quaternary structure, interacts with POU5F1/OCT4. Interacts with NANOG. Interacts with BEND3. Interacts with NSD2 (via PHD-type zinc fingers 1, 2 and 3). Interacts with NRBP1. Sumoylation with both SUMO1 and SUMO2 regulates the stability, subcellular localization, transcriptional activity, and may reduce interaction with POU5F1/OCT4.

It is found in the cytoplasm. It localises to the nucleus. Transcription factor with a key role in the maintenance and self-renewal of embryonic and hematopoietic stem cells. This Mus musculus (Mouse) protein is Sal-like protein 4 (Sall4).